The chain runs to 202 residues: Protein-methionine-sulfoxide reductase heme-binding subunit MsrQ (202 aa).

The next 6 membrane-spanning stretches (helical) occupy residues 8 to 28 (LAVF…AWIF), 42 to 62 (LGLG…LQKL), 75 to 95 (LGLW…VFIL), 110 to 130 (PYII…ITSN), 147 to 167 (LVYL…RADL), and 169 to 189 (EWTL…PSIA).

This sequence belongs to the MsrQ family. Heterodimer of a catalytic subunit (MsrP) and a heme-binding subunit (MsrQ). FMN serves as cofactor. The cofactor is heme b.

Its subcellular location is the cell inner membrane. Part of the MsrPQ system that repairs oxidized periplasmic proteins containing methionine sulfoxide residues (Met-O), using respiratory chain electrons. Thus protects these proteins from oxidative-stress damage caused by reactive species of oxygen and chlorine generated by the host defense mechanisms. MsrPQ is essential for the maintenance of envelope integrity under bleach stress, rescuing a wide series of structurally unrelated periplasmic proteins from methionine oxidation. MsrQ provides electrons for reduction to the reductase catalytic subunit MsrP, using the quinone pool of the respiratory chain. In Pseudomonas aeruginosa (strain UCBPP-PA14), this protein is Protein-methionine-sulfoxide reductase heme-binding subunit MsrQ.